A 40-amino-acid chain; its full sequence is Large ribosomal subunit protein bL36 (40 aa).

This sequence belongs to the bacterial ribosomal protein bL36 family.

The protein is Large ribosomal subunit protein bL36 of Corynebacterium aurimucosum (strain ATCC 700975 / DSM 44827 / CIP 107346 / CN-1) (Corynebacterium nigricans).